The following is a 409-amino-acid chain: MLISNVGINPAAYLNNHSVENSSQTASQSVSAKDILNSIGISSSKVSDLGLSPTLSAPAPGVLTQTPGTITSFLKASIQNTDMNQDLNALANNVTTKANEVVQTQLREQQAEVGKFFDISGMSSSAVALLAAANTLMLTLNQADSKLSGKLSLVSFDAAKTTASSMMREGMNALSGSISQSALQLGITGVGAKLEYKGLQNERGALKHNAAKIDKLTTESHSIKNVLNGQNSVKLGAEGVDSLKSLNMKKTGTDATKNLNDATLKSNAGTSATESLGIKNSNKQISPEHQAILSKRLESVESDIRLEQNTMDMTRIDARKMQMTGDLIMKNSVTVGGIAGASRQYAATQERSEQQISQVNNRVASTASDEARESSRKSTSLIQEMLKTMESINQSKASALAAIAGNIRA.

A helical transmembrane segment spans residues 119–140; sequence ISGMSSSAVALLAAANTLMLTL. Residues 350-368 are compositionally biased toward polar residues; it reads ERSEQQISQVNNRVASTAS. Residues 350–378 are disordered; sequence ERSEQQISQVNNRVASTASDEARESSRKS.

This sequence belongs to the SctB/SipC family. The core secretion machinery of the T3SS is composed of approximately 20 different proteins, including cytoplasmic components, a base, an export apparatus and a needle. This subunit is involved in the formation of a pore, called the translocon, in host membrane.

The protein resides in the secreted. Its subcellular location is the host membrane. Functionally, component of the type III secretion system 1 (SPI-1 T3SS), also called injectisome, which is used to inject bacterial effector proteins into eukaryotic host cells. SipB/SctE1 and SipC/SctB1 are inserted into the host membrane where they form a pore and allow the translocation of effector proteins into the cytosol of target cells. The protein is SPI-1 type 3 secretion system translocon protein SctB of Salmonella typhi.